A 146-amino-acid polypeptide reads, in one-letter code: Hemoglobin subunit beta (146 aa).

Val-1 bears the N-acetylvaline mark. A Globin domain is found at 2–146 (HLTADEKSAV…VATALGHKYH (145 aa)). Thr-12 bears the Phosphothreonine mark. Ser-44 bears the Phosphoserine mark. Lys-59 carries the N6-acetyllysine modification. His-63 contacts heme b. Lys-82 is modified (N6-acetyllysine). Position 92 (His-92) interacts with heme b. At Cys-93 the chain carries S-nitrosocysteine. Lys-144 carries the post-translational modification N6-acetyllysine.

The protein belongs to the globin family. Heterotetramer of two alpha chains and two beta chains. Red blood cells.

Functionally, involved in oxygen transport from the lung to the various peripheral tissues. This Antrozous pallidus (Pallid bat) protein is Hemoglobin subunit beta (HBB).